The sequence spans 324 residues: Beta-ketoacyl-[acyl-carrier-protein] synthase III (324 aa).

Catalysis depends on residues Cys114 and His246. Residues Gln247 to Arg251 form an ACP-binding region. Residue Asn276 is part of the active site.

It belongs to the thiolase-like superfamily. FabH family. In terms of assembly, homodimer.

It is found in the cytoplasm. The catalysed reaction is malonyl-[ACP] + acetyl-CoA + H(+) = 3-oxobutanoyl-[ACP] + CO2 + CoA. It participates in lipid metabolism; fatty acid biosynthesis. Its function is as follows. Catalyzes the condensation reaction of fatty acid synthesis by the addition to an acyl acceptor of two carbons from malonyl-ACP. Catalyzes the first condensation reaction which initiates fatty acid synthesis and may therefore play a role in governing the total rate of fatty acid production. Possesses both acetoacetyl-ACP synthase and acetyl transacylase activities. Its substrate specificity determines the biosynthesis of branched-chain and/or straight-chain of fatty acids. The sequence is that of Beta-ketoacyl-[acyl-carrier-protein] synthase III from Campylobacter jejuni subsp. jejuni serotype O:2 (strain ATCC 700819 / NCTC 11168).